A 155-amino-acid polypeptide reads, in one-letter code: 6,7-dimethyl-8-ribityllumazine synthase (155 aa).

Residues Phe24, 58–60, and 82–84 contribute to the 5-amino-6-(D-ribitylamino)uracil site; these read AFE and VII. 87–88 contributes to the (2S)-2-hydroxy-3-oxobutyl phosphate binding site; it reads ST. The Proton donor role is filled by His90. Phe115 is a binding site for 5-amino-6-(D-ribitylamino)uracil. Arg129 is a (2S)-2-hydroxy-3-oxobutyl phosphate binding site.

This sequence belongs to the DMRL synthase family.

It catalyses the reaction (2S)-2-hydroxy-3-oxobutyl phosphate + 5-amino-6-(D-ribitylamino)uracil = 6,7-dimethyl-8-(1-D-ribityl)lumazine + phosphate + 2 H2O + H(+). It participates in cofactor biosynthesis; riboflavin biosynthesis; riboflavin from 2-hydroxy-3-oxobutyl phosphate and 5-amino-6-(D-ribitylamino)uracil: step 1/2. In terms of biological role, catalyzes the formation of 6,7-dimethyl-8-ribityllumazine by condensation of 5-amino-6-(D-ribitylamino)uracil with 3,4-dihydroxy-2-butanone 4-phosphate. This is the penultimate step in the biosynthesis of riboflavin. This Chlorobium phaeobacteroides (strain DSM 266 / SMG 266 / 2430) protein is 6,7-dimethyl-8-ribityllumazine synthase.